The primary structure comprises 121 residues: Large ribosomal subunit protein bL19 (121 aa).

The protein belongs to the bacterial ribosomal protein bL19 family.

This protein is located at the 30S-50S ribosomal subunit interface and may play a role in the structure and function of the aminoacyl-tRNA binding site. This chain is Large ribosomal subunit protein bL19, found in Chlamydia caviae (strain ATCC VR-813 / DSM 19441 / 03DC25 / GPIC) (Chlamydophila caviae).